The chain runs to 859 residues: MQEQYTPSEIEAKVQQHWQDTKTFEVTEDENKEKFYCLSMFPYPSGRLHMGHVRNYTIGDVVSRYQRLQGKNVLQPIGWDSFGLPAENAAIKNNTAPAPWTYENIDYMKNQLKMLGFGYDWSREIATCTPEYYRWEQWFFTKLYEKGLVYKKTSSVNWCPNDETVLANEQVIDGCCWRCDTTVEQKEIPQWFIKITEYAEELLNDIDTLEEWPEQVKTMQRNWIGRSEGIEMTFQVAGSDQSFDIYTTRPDTVMGVTYVAIAAGHPLAEQAAINNPALVEFIEECKNADTTEAAMAAMEKKGVATGLNAIHPITGKEVPIWVGNFVLMNYGTGAVMSVPAHDQRDYEFAKKYGLNIEAVIKPVDGEVDISEEAYTEKGVLFNSAEFDGLDFQAAFDAIDAKLTAEGKGKRQVNFRLRDWGVSRQRYWGAPIPMVTLADGTVMPTPEDQLPVILPEDVVMDGIQSPIKSDKEWAKTTINGQEAFRETDTFDTFMESSWYYARYCSPHADEMLDPAKANYWLPVDQYIGGIEHACMHLLYFRFFHKLLRDTGLVNSNEPAKRLLTQGMVLADAYYYNNEKGARVWVAPSDVTVQETDDKGRTVKAVDSEGHELVYTGMSKMSKSKNNGIDPQEMVDKYGADTVRLFMMFAAPPELTLEWQESSVEGAHRFIKRLWKTAHDHIANGTTAELDVKSLNAAQKELRRELHKTIAKVGDDIERRQMFNTAIASIMELMNRLQKAPSETDQDKALMQEALNAVIRLLYPIIPHTCFVLWNELGNQGAIEEVLWPEVDESALVEDSKLIIVQVNGKLRAKITVAADASKEEVEAAGMAEEGVVKHTEDKTVRKVIYVPGKLLNIVAN.

The 'HIGH' region signature appears at proline 42 to histidine 52. The 'KMSKS' region motif lies at lysine 618–serine 622. An ATP-binding site is contributed by lysine 621.

The protein belongs to the class-I aminoacyl-tRNA synthetase family.

The protein localises to the cytoplasm. The catalysed reaction is tRNA(Leu) + L-leucine + ATP = L-leucyl-tRNA(Leu) + AMP + diphosphate. The protein is Leucine--tRNA ligase of Shewanella pealeana (strain ATCC 700345 / ANG-SQ1).